The following is a 487-amino-acid chain: NADH-quinone oxidoreductase subunit N (487 aa).

13 helical membrane passes run 7 to 27 (LTLI…ILIT), 37 to 57 (LVSI…APAL), 81 to 101 (FAKI…PAFF), 112 to 132 (PVLV…GDLI), 166 to 186 (FVLG…VYGF), 207 to 227 (ALFG…AVPF), 237 to 257 (GAPT…AVAL), 276 to 296 (IVIF…IGQT), 307 to 327 (INNV…GLSA), 329 to 349 (LTYL…LLML), 373 to 393 (LAWC…LLGF), 407 to 427 (DMVL…FYYI), and 452 to 472 (VLLI…TGWL).

It belongs to the complex I subunit 2 family. In terms of assembly, NDH-1 is composed of 14 different subunits. Subunits NuoA, H, J, K, L, M, N constitute the membrane sector of the complex.

It is found in the cell inner membrane. The enzyme catalyses a quinone + NADH + 5 H(+)(in) = a quinol + NAD(+) + 4 H(+)(out). In terms of biological role, NDH-1 shuttles electrons from NADH, via FMN and iron-sulfur (Fe-S) centers, to quinones in the respiratory chain. The immediate electron acceptor for the enzyme in this species is believed to be ubiquinone. Couples the redox reaction to proton translocation (for every two electrons transferred, four hydrogen ions are translocated across the cytoplasmic membrane), and thus conserves the redox energy in a proton gradient. The polypeptide is NADH-quinone oxidoreductase subunit N (Erythrobacter litoralis (strain HTCC2594)).